The chain runs to 927 residues: 2-oxoadipate dehydrogenase complex component E1 (927 aa).

This sequence belongs to the alpha-ketoglutarate dehydrogenase family. As to quaternary structure, the 2-oxoadipate dehydrogenase complex is composed of OADH (2-oxoadipate dehydrogenase; E1a), DLST (dihydrolipoamide succinyltransferase; E2) and DLD (dihydrolipoamide dehydrogenase; E3). E1a functional unit is a dimer. Thiamine diphosphate serves as cofactor.

The protein resides in the mitochondrion. It carries out the reaction N(6)-[(R)-lipoyl]-L-lysyl-[protein] + 2-oxoadipate + H(+) = N(6)-[(R)-S(8)-glutaryldihydrolipoyl]-L-lysyl-[protein] + CO2. It functions in the pathway amino-acid degradation. Functionally, 2-oxoadipate dehydrogenase (E1a) component of the 2-oxoadipate dehydrogenase complex (OADHC). Participates in the first step, rate limiting for the overall conversion of 2-oxoadipate (alpha-ketoadipate) to glutaryl-CoA and CO(2) catalyzed by the whole OADHC. Catalyzes the irreversible decarboxylation of 2-oxoadipate via the thiamine diphosphate (ThDP) cofactor and subsequent transfer of the decarboxylated acyl intermediate on an oxidized dihydrolipoyl group that is covalently amidated to the E2 enzyme (dihydrolipoyllysine-residue succinyltransferase or DLST). Can catalyze the decarboxylation of 2-oxoglutarate in vitro, but at a much lower rate than 2-oxoadipate. Responsible for the last step of L-lysine, L-hydroxylysine and L-tryptophan catabolism with the common product being 2-oxoadipate. This is 2-oxoadipate dehydrogenase complex component E1 (dhtkd1) from Xenopus laevis (African clawed frog).